Here is a 251-residue protein sequence, read N- to C-terminus: uncharacterized protein (251 aa).

36-43 (GKQGTGKT) contributes to the ATP binding site. The disordered stretch occupies residues 230 to 251 (SDNKTENPSNPSLLTKIDDVTR).

Its function is as follows. This protein may be involved in virus assembly. Essential for virus function. This is an uncharacterized protein from Sulfolobus spindle-shape virus 1 (SSV1).